The following is an 89-amino-acid chain: uncharacterized protein (89 aa).

Position 1 (methionine 1) is a topological domain, cytoplasmic. Residues 2 to 22 form a helical membrane-spanning segment; sequence LFEIIYIVSSLFYIVSIIYTL. The Extracellular segment spans residues 23 to 89; it reads MRIKHINTVA…ELKKSKLCEG (67 aa).

The protein resides in the host membrane. This is an uncharacterized protein from Sulfolobus islandicus filamentous virus (isolate Iceland/Hveragerdi) (SIFV).